Reading from the N-terminus, the 603-residue chain is Geraniol synthase Tps-5031G8, chloroplastic (603 aa).

Residues methionine 1–serine 35 constitute a chloroplast transit peptide. The (2E)-geranyl diphosphate site is built by arginine 319, aspartate 356, aspartate 360, arginine 497, and aspartate 500. The Mg(2+) site is built by aspartate 356 and aspartate 360. A DDXXD motif motif is present at residues aspartate 356 to aspartate 360. Residues aspartate 500, threonine 504, and glutamate 508 each contribute to the Mg(2+) site.

Belongs to the terpene synthase family. Tpsb subfamily. Monomer. The cofactor is Mg(2+). Requires Mn(2+) as cofactor.

It is found in the plastid. Its subcellular location is the chloroplast. The enzyme catalyses (2E)-geranyl diphosphate + H2O = (2E)-geraniol + diphosphate. It functions in the pathway secondary metabolite biosynthesis; terpenoid biosynthesis. Its function is as follows. Monoterpene synthase (mono-TPS) involved in the biosynthesis of monoterpenes natural products. Catalyzes the conversion of (2E)-geranyl diphosphate (GPP) into geraniol. The chain is Geraniol synthase Tps-5031G8, chloroplastic from Perilla frutescens var. hirtella (Perilla citriodora).